Consider the following 751-residue polypeptide: Adhesive plaque matrix protein (751 aa).

The first 20 residues, 1-20 (MEGIKLNLCLLCIFTCDILG), serve as a signal peptide directing secretion. The tract at residues 21 to 41 (FSNGNIYNAHGSAYAGASAGA) is nonrepetitive linker. Tandem repeats lie at residues 109 to 118 (YKPKMTYPPT), 119 to 128 (YKPKPSYPPT), 129 to 138 (YKPKPSYPAT), 139 to 148 (YKSKSSYPSS), 149 to 158 (YKPKKTYPPT), 159 to 168 (YKPKLTYPPT), 169 to 178 (YKPKPSYPPT), 179 to 188 (YKPKPSYPAT), 189 to 198 (YKSKSSYPPS), 199 to 208 (YKTKKTYPSS), 209 to 218 (YKPKKTYPST), 219 to 228 (YKPKVSYPPT), 229 to 238 (YKSKKSYPPI), 239 to 248 (YKTKASYPSS), 249 to 258 (YKPKKTYPST), 259 to 268 (YKPKISYPPT), 269 to 278 (YKAKPSYPTS), 279 to 288 (YRAKPSYPST), 289 to 298 (YKAKPSYPPT), 299 to 308 (YKAKPSYPPT), 309 to 318 (YKAKPTYPST), 319 to 328 (YKAKPSYPPT), 329 to 338 (YKAKPSYPPT), 339 to 348 (YKAKPSYPPS), 349 to 358 (YKPKTTYPPS), 359 to 368 (YKPKISYPPT), 369 to 378 (YKAKPSYPPI), 379 to 388 (YKAKPSYPPT), 389 to 398 (YKAKPSYLPT), 399 to 408 (YKAKPSYPPT), 409 to 418 (YKAKPRYPTT), 419 to 428 (YKAKPSYPPT), 429 to 438 (YKAKPSYPPT), 439 to 448 (YKAKLSYPPT), 449 to 458 (YKAKPSYPPT), 459 to 468 (YKAKPSYPPT), 469 to 478 (YKAKPSYPPT), 479 to 488 (YKTKPSYPRT), 489 to 498 (YKAKPSYSST), 499 to 508 (YKAKPSYPPT), 509 to 518 (YKAKPSYPPT), 519 to 528 (YKAKPSYPPT), 529 to 538 (YKAKPSYPPT), 539 to 548 (YKAKPSYPPT), 549 to 558 (YKAKPSYPQT), 559 to 568 (YKAKSSYPPT), 569 to 578 (YKAKPSYPPT), 579 to 588 (YKAKPSYPPT), 589 to 598 (YKAKPSYPPT), 599 to 608 (YKAKPSYPPT), 609 to 618 (YKAKPSYPPT), 619 to 628 (YKAKPSYPPT), 629 to 638 (YKAKPSYPPT), 639 to 648 (YKAKPSYPPT), and 649 to 658 (YKAKPSYPAT). The tract at residues 109-732 (YKPKMTYPPT…YKPKPSYPPT (624 aa)) is 63 X 10 AA tandem repeats of Y-[KR]-[APTS]-K-[KPMSLTIVA]-[STR]-Y-[PLS]-[PASRQT]-[STI]. Residues 158–167 (TYKPKLTYPP) show a composition bias toward low complexity. The tract at residues 158 to 359 (TYKPKLTYPP…KPKTTYPPSY (202 aa)) is disordered. Pro residues predominate over residues 168–184 (TYKPKPSYPPTYKPKPS). A compositionally biased stretch (low complexity) spans 185 to 262 (YPATYKSKSS…KTYPSTYKPK (78 aa)). 2 stretches are compositionally biased toward low complexity: residues 288-343 (TYKA…KAKP) and 350-359 (KPKTTYPPSY). A disordered region spans residues 397–636 (PTYKAKPSYP…PTYKAKPSYP (240 aa)). Positions 444–486 (SYPPTYKAKPSYPPTYKAKPSYPPTYKAKPSYPPTYKTKPSYP) are enriched in low complexity. A 56; truncated repeat occupies 659-662 (YPST). The interval 660–751 (PSTYKAKPSY…KKKISYPSQY (92 aa)) is disordered. Residues 662 to 677 (TYKAKPSYPPTYKAKP) show a composition bias toward low complexity. A run of 7 repeats spans residues 663 to 672 (YKAKPSYPPT), 673 to 682 (YKAKPSYPPT), 683 to 692 (YKPKPSYPPT), 693 to 702 (YKSKSSYPSS), 703 to 712 (YKPKKTYPPT), 713 to 722 (YKPKLTYPPI), and 723 to 732 (YKPKPSYPPT). Positions 678–690 (SYPPTYKPKPSYP) are enriched in pro residues. A compositionally biased stretch (low complexity) spans 691 to 721 (PTYKSKSSYPSSYKPKKTYPPTYKPKLTYPP).

In terms of processing, hydroxylated on proline (mono- or dihydroxylation) and tyrosine residues (to L-DOPA = 3',4'-dihydroxyphenylalanine) of the tandem repeats. Produced by the byssal gland.

It is found in the secreted. In terms of biological role, provides adhesiveness to the mussel's foot. Mussels produce one of the strongest water insoluble glues. The mussel's adhesive is a bundle of threads, called a byssus, formed by a fibrous collagenous core coated with adhesive proteins. The protein is Adhesive plaque matrix protein (FP1) of Mytilus galloprovincialis (Mediterranean mussel).